Reading from the N-terminus, the 142-residue chain is MRHGNGYRKLNRTASHRKAMFANMAASLIEHEQIVTTLPKAKEIRPIVEKLVTLGKRGDLHARRQAISAIRDVKLVAKLFDTLAARYATRNGGYIRIMKAGFRAGDNAPLAVVEFVERDVDAKGKADRARVEAEAAAEADAA.

It belongs to the bacterial ribosomal protein bL17 family. As to quaternary structure, part of the 50S ribosomal subunit. Contacts protein L32.

This chain is Large ribosomal subunit protein bL17, found in Brucella canis (strain ATCC 23365 / NCTC 10854 / RM-666).